We begin with the raw amino-acid sequence, 260 residues long: Hydroxyethylthiazole kinase 1 (260 aa).

M39 serves as a coordination point for substrate. ATP-binding residues include R115 and T160. Substrate is bound at residue G187.

Belongs to the Thz kinase family. Requires Mg(2+) as cofactor.

The enzyme catalyses 5-(2-hydroxyethyl)-4-methylthiazole + ATP = 4-methyl-5-(2-phosphooxyethyl)-thiazole + ADP + H(+). It functions in the pathway cofactor biosynthesis; thiamine diphosphate biosynthesis; 4-methyl-5-(2-phosphoethyl)-thiazole from 5-(2-hydroxyethyl)-4-methylthiazole: step 1/1. Functionally, catalyzes the phosphorylation of the hydroxyl group of 4-methyl-5-beta-hydroxyethylthiazole (THZ). The protein is Hydroxyethylthiazole kinase 1 of Streptococcus pneumoniae serotype 19F (strain G54).